The primary structure comprises 156 residues: ATP synthase subunit b 1 (156 aa).

The chain crosses the membrane as a helical span at residues 7-27; the sequence is LFLQAIVFAILVWFTMKFVWP.

This sequence belongs to the ATPase B chain family. In terms of assembly, F-type ATPases have 2 components, F(1) - the catalytic core - and F(0) - the membrane proton channel. F(1) has five subunits: alpha(3), beta(3), gamma(1), delta(1), epsilon(1). F(0) has three main subunits: a(1), b(2) and c(10-14). The alpha and beta chains form an alternating ring which encloses part of the gamma chain. F(1) is attached to F(0) by a central stalk formed by the gamma and epsilon chains, while a peripheral stalk is formed by the delta and b chains.

It localises to the cell inner membrane. F(1)F(0) ATP synthase produces ATP from ADP in the presence of a proton or sodium gradient. F-type ATPases consist of two structural domains, F(1) containing the extramembraneous catalytic core and F(0) containing the membrane proton channel, linked together by a central stalk and a peripheral stalk. During catalysis, ATP synthesis in the catalytic domain of F(1) is coupled via a rotary mechanism of the central stalk subunits to proton translocation. Functionally, component of the F(0) channel, it forms part of the peripheral stalk, linking F(1) to F(0). This chain is ATP synthase subunit b 1, found in Albidiferax ferrireducens (strain ATCC BAA-621 / DSM 15236 / T118) (Rhodoferax ferrireducens).